Reading from the N-terminus, the 192-residue chain is Ion-translocating oxidoreductase complex subunit A (192 aa).

The next 6 helical transmembrane spans lie at 5 to 25 (ILLL…FLGL), 39 to 59 (IGMG…AYLV), 72 to 92 (LRTM…EMVV), 102 to 122 (LLGI…VALL), 134 to 154 (IIYG…FASM), and 171 to 191 (SIAM…TGLV).

The protein belongs to the NqrDE/RnfAE family. The complex is composed of six subunits: RnfA, RnfB, RnfC, RnfD, RnfE and RnfG.

The protein resides in the cell inner membrane. In terms of biological role, part of a membrane-bound complex that couples electron transfer with translocation of ions across the membrane. The protein is Ion-translocating oxidoreductase complex subunit A of Vibrio vulnificus (strain CMCP6).